We begin with the raw amino-acid sequence, 430 residues long: Putative assembly protein ORF430 (430 aa).

Positions 1-20 are cleaved as a signal peptide; that stretch reads MIRSIIALMLSFALVPFAFA. The chain crosses the membrane as a helical span at residues 226 to 245; sequence LSVAAGSSIGFGFLSNTLSL.

It is found in the host membrane. May play a role in phage assembly. The sequence is that of Putative assembly protein ORF430 from Pseudomonas aeruginosa (Bacteriophage Pf3).